A 75-amino-acid polypeptide reads, in one-letter code: Conotoxin VnMSGL-0111 (75 aa).

Positions 1–20 (MSGLEIMVLTLLLLVSMATS) are cleaved as a signal peptide. Positions 21 to 44 (HQDGGEKQATQRDAINVRRRSITR) are excised as a propeptide. Cystine bridges form between C48/C60, C52/C69, and C59/C73.

The protein belongs to the conotoxin O3 superfamily. As to expression, expressed by the venom duct.

It localises to the secreted. This is Conotoxin VnMSGL-0111 from Conus ventricosus (Mediterranean cone).